The sequence spans 396 residues: NADH-quinone oxidoreductase subunit D (396 aa).

It belongs to the complex I 49 kDa subunit family. In terms of assembly, NDH-1 is composed of 14 different subunits. Subunits NuoB, C, D, E, F, and G constitute the peripheral sector of the complex.

It localises to the cell inner membrane. The catalysed reaction is a quinone + NADH + 5 H(+)(in) = a quinol + NAD(+) + 4 H(+)(out). Functionally, NDH-1 shuttles electrons from NADH, via FMN and iron-sulfur (Fe-S) centers, to quinones in the respiratory chain. The immediate electron acceptor for the enzyme in this species is believed to be ubiquinone. Couples the redox reaction to proton translocation (for every two electrons transferred, four hydrogen ions are translocated across the cytoplasmic membrane), and thus conserves the redox energy in a proton gradient. The protein is NADH-quinone oxidoreductase subunit D of Chelativorans sp. (strain BNC1).